The primary structure comprises 334 residues: Beta-1,3-N-acetylglucosaminyltransferase radical fringe (334 aa).

At 1–6 (MSRVRR) the chain is on the cytoplasmic side. The chain crosses the membrane as a helical; Signal-anchor for type II membrane protein span at residues 7–29 (VLCRACLALAAVLAVLLLLPLPL). Residues 30–334 (PLPLPLPRAP…MKNRGKEAFQ (305 aa)) are Lumenal-facing. Substrate is bound at residue Arg77. N-linked (GlcNAc...) asparagine glycosylation occurs at Asn116. 2 cysteine pairs are disulfide-bonded: Cys117–Cys128 and Cys146–Cys210. Asp150 provides a ligand contact to substrate. Residue Asp151 coordinates Mn(2+). The active site involves Asp240. His264 is a Mn(2+) binding site. Residues Cys314 and Cys323 are joined by a disulfide bond.

Belongs to the glycosyltransferase 31 family. Mn(2+) serves as cofactor. As to expression, most abundantly expressed in adult brain. Expressed in most neurons of the brain but not in glial cells. Also detected to a lower extent in adult lung and kidney.

The protein resides in the golgi apparatus membrane. It catalyses the reaction 3-O-(alpha-L-fucosyl)-L-threonyl-[EGF-like domain protein] + UDP-N-acetyl-alpha-D-glucosamine = 3-O-(N-acetyl-beta-D-glucosaminyl-(1-&gt;3)-alpha-L-fucosyl)-L-threonyl-[EGF-like domain protein] + UDP + H(+). The enzyme catalyses 3-O-(alpha-L-fucosyl)-L-seryl-[EGF-like domain protein] + UDP-N-acetyl-alpha-D-glucosamine = 3-O-(N-acetyl-beta-D-glucosaminyl-(1-&gt;3)-alpha-L-fucosyl)-L-seryl-[EGF-like domain protein] + UDP + H(+). Its function is as follows. Glycosyltransferase that initiates the elongation of O-linked fucose residues attached to EGF-like repeats in the extracellular domain of Notch molecules. Modulates NOTCH1 activity by modifying O-fucose residues at specific EGF-like domains resulting in enhancement of NOTCH1 activation by DLL1 and JAG1. Inhibits Notch signaling in postmitotic neurons of the brain. It may play a role in adult brain and in neurogenesis. It may play a role in limb development. The protein is Beta-1,3-N-acetylglucosaminyltransferase radical fringe of Rattus norvegicus (Rat).